The primary structure comprises 274 residues: 3-methyl-2-oxobutanoate hydroxymethyltransferase (274 aa).

2 residues coordinate Mg(2+): aspartate 49 and aspartate 88. Residues 49–50, aspartate 88, and lysine 118 contribute to the 3-methyl-2-oxobutanoate site; that span reads DS. Glutamate 120 contributes to the Mg(2+) binding site. Residue glutamate 187 is the Proton acceptor of the active site.

It belongs to the PanB family. Homodecamer; pentamer of dimers. Mg(2+) serves as cofactor.

The protein resides in the cytoplasm. It carries out the reaction 3-methyl-2-oxobutanoate + (6R)-5,10-methylene-5,6,7,8-tetrahydrofolate + H2O = 2-dehydropantoate + (6S)-5,6,7,8-tetrahydrofolate. Its pathway is cofactor biosynthesis; (R)-pantothenate biosynthesis; (R)-pantoate from 3-methyl-2-oxobutanoate: step 1/2. In terms of biological role, catalyzes the reversible reaction in which hydroxymethyl group from 5,10-methylenetetrahydrofolate is transferred onto alpha-ketoisovalerate to form ketopantoate. The chain is 3-methyl-2-oxobutanoate hydroxymethyltransferase from Parvibaculum lavamentivorans (strain DS-1 / DSM 13023 / NCIMB 13966).